A 222-amino-acid chain; its full sequence is MIF4G domain-containing protein B (222 aa).

An MIF4G domain is found at 3 to 205; it reads NSSKEDYKIQ…LEILEFRAGG (203 aa).

It belongs to the MIF4GD family. In terms of assembly, interacts with eif4g1, eif4g2 and slbp; probably tethered by SLBP to the 3'-end of mRNAs ending with the histone stem-loop, it also interacts with eif4g1 which is bound to their 5'-end.

It localises to the cytoplasm. Its subcellular location is the nucleus. Functionally, functions in replication-dependent translation of histone mRNAs which differ from other eukaryotic mRNAs in that they do not end with a poly-A tail but a stem-loop. May participate in circularizing those mRNAs specifically enhancing their translation. This Danio rerio (Zebrafish) protein is MIF4G domain-containing protein B (mif4gdb).